The sequence spans 154 residues: Small ribosomal subunit protein bS6 (154 aa).

A disordered region spans residues Lys-107–Glu-154. Positions Glu-125–Glu-154 are enriched in basic and acidic residues.

This sequence belongs to the bacterial ribosomal protein bS6 family.

Binds together with bS18 to 16S ribosomal RNA. The sequence is that of Small ribosomal subunit protein bS6 from Granulibacter bethesdensis (strain ATCC BAA-1260 / CGDNIH1).